We begin with the raw amino-acid sequence, 608 residues long: Probable methyltransferase PMT3 (608 aa).

Topologically, residues 1–12 are cytoplasmic; the sequence is MKGRSDGGQKKR. Residues 13–33 traverse the membrane as a helical; Signal-anchor for type II membrane protein segment; that stretch reads VIALVCVAAVVLVFVYLFYGS. At 34 to 608 the chain is on the lumenal side; it reads SDHRASAIEY…LTSESLRDME (575 aa). Asn-342 is a glycosylation site (N-linked (GlcNAc...) asparagine).

It belongs to the methyltransferase superfamily.

It is found in the golgi apparatus membrane. This is Probable methyltransferase PMT3 from Arabidopsis thaliana (Mouse-ear cress).